Reading from the N-terminus, the 310-residue chain is MDWKQKKIGVLYGGLSEEREVSLRSGQALFVALQSLGYQVVAIDVDRHITKVLEREGIEVAVLALHGPMGEDGTIQGLLEFMGIPYTGPNVAASAICMDKGLSKRLFHSEGLPTPAWIELAGDHEEADELVDHFLGDFHGAAFVKPLDSGSSVGISRAVGKDELIRGVAKALSVSHRCMVERAIEGRELTLSILDGEAFPLIEIVPIDGFYDYDHKYTAGRTNYLVPAPNLDDKSLEAVVKIGLAAYHITGCRGLVRADFILDGEGTPWLLELNTIPGMTELSLAPKAAHAVGIEMPQLAERILQGARLK.

Residues 104-305 (KRLFHSEGLP…MPQLAERILQ (202 aa)) form the ATP-grasp domain. Residue 135–190 (LGDFHGAAFVKPLDSGSSVGISRAVGKDELIRGVAKALSVSHRCMVERAIEGRELT) coordinates ATP. Aspartate 259, glutamate 272, and asparagine 274 together coordinate Mg(2+).

It belongs to the D-alanine--D-alanine ligase family. It depends on Mg(2+) as a cofactor. Requires Mn(2+) as cofactor.

Its subcellular location is the cytoplasm. The catalysed reaction is 2 D-alanine + ATP = D-alanyl-D-alanine + ADP + phosphate + H(+). The protein operates within cell wall biogenesis; peptidoglycan biosynthesis. Its function is as follows. Cell wall formation. The protein is D-alanine--D-alanine ligase of Magnetococcus marinus (strain ATCC BAA-1437 / JCM 17883 / MC-1).